Reading from the N-terminus, the 231-residue chain is MDARQMKIKAAEAALSHVQDGMRLGIGTGSTAEEFVRLLAEKVAAGLKVEGVPTSERTARLCVELGVPLKSLDELPELDLTIDGADEVDHVLRLVKGGGGALLREKIVAAASGRMIVIADQSKVVETLGAFPLPIEINPFGQVATRIAIEKLAARSGLSGELTMRSSGDGAFMTDGGHLILDASFGRIPDAEALARELNTIPGVVEHGLFINLASLAIIAGPEGARMMQAV.

Residues 28 to 31 (TGST), 83 to 86 (DGAD), and 96 to 99 (KGGG) contribute to the substrate site. The active-site Proton acceptor is the glutamate 105. Lysine 123 contributes to the substrate binding site.

Belongs to the ribose 5-phosphate isomerase family. Homodimer.

It carries out the reaction aldehydo-D-ribose 5-phosphate = D-ribulose 5-phosphate. It functions in the pathway carbohydrate degradation; pentose phosphate pathway; D-ribose 5-phosphate from D-ribulose 5-phosphate (non-oxidative stage): step 1/1. In terms of biological role, catalyzes the reversible conversion of ribose-5-phosphate to ribulose 5-phosphate. This chain is Ribose-5-phosphate isomerase A, found in Agrobacterium fabrum (strain C58 / ATCC 33970) (Agrobacterium tumefaciens (strain C58)).